The primary structure comprises 383 residues: L-lactate dehydrogenase (383 aa).

The FMN hydroxy acid dehydrogenase domain maps to 1-380 (MIISSGNDYR…NTDCLVQAIK (380 aa)). Tyr-24 is a substrate binding site. Residues Ser-106 and Gln-127 each coordinate FMN. Residue Tyr-129 participates in substrate binding. Thr-155 lines the FMN pocket. Substrate is bound at residue Arg-164. Position 251 (Lys-251) interacts with FMN. Residue His-275 is the Proton acceptor of the active site. Residue Arg-278 participates in substrate binding. 306 to 330 (DSGIRNGLDVVRMLALGADTVLLGR) lines the FMN pocket.

It belongs to the FMN-dependent alpha-hydroxy acid dehydrogenase family. Requires FMN as cofactor.

It localises to the cell inner membrane. The catalysed reaction is (S)-lactate + A = pyruvate + AH2. Functionally, catalyzes the conversion of L-lactate to pyruvate. Is coupled to the respiratory chain. This Acinetobacter baumannii (strain SDF) protein is L-lactate dehydrogenase.